Here is a 165-residue protein sequence, read N- to C-terminus: Group 10 secretory phospholipase A2 (165 aa).

Positions 1–31 are cleaved as a signal peptide; that stretch reads MGPLPVCLPIMLLLLLPSLLLLLLLPGPGSG. A propeptide spanning residues 32–42 is cleaved from the precursor; it reads EASRILRVHRR. Disulfide bonds link C53–C111, C67–C157, C69–C85, C84–C139, C90–C164, C91–C132, C100–C125, and C118–C130. F68, G70, and G72 together coordinate Ca(2+). H88 is a catalytic residue. D89 lines the Ca(2+) pocket. N113 carries an N-linked (GlcNAc...) asparagine glycan. D133 is a catalytic residue.

This sequence belongs to the phospholipase A2 family. Interacts with PLA2R1; this interaction mediates PLA2G10 clearance and inactivation. It depends on Ca(2+) as a cofactor. In terms of tissue distribution, found in spleen, thymus, peripheral blood leukocytes, pancreas, lung, and colon. Expressed in neuronal fibers in dorsal root ganglia and in peripheral tissues including stomach, white adipose tissue and prostate (at protein level).

It localises to the secreted. It is found in the lysosome. The protein localises to the cytoplasmic vesicle. The protein resides in the secretory vesicle. Its subcellular location is the acrosome. The enzyme catalyses a 1,2-diacyl-sn-glycero-3-phosphocholine + H2O = a 1-acyl-sn-glycero-3-phosphocholine + a fatty acid + H(+). It carries out the reaction 1-hexadecanoyl-2-(9Z-octadecenoyl)-sn-glycero-3-phosphocholine + H2O = 1-hexadecanoyl-sn-glycero-3-phosphocholine + (9Z)-octadecenoate + H(+). The catalysed reaction is 1-octadecanoyl-2-(5Z,8Z,11Z,14Z-eicosatetraenoyl)-sn-glycero-3-phosphocholine + H2O = 1-octadecanoyl-sn-glycero-3-phosphocholine + (5Z,8Z,11Z,14Z)-eicosatetraenoate + H(+). It catalyses the reaction 1,2-dihexadecanoyl-sn-glycero-3-phosphocholine + H2O = 1-hexadecanoyl-sn-glycero-3-phosphocholine + hexadecanoate + H(+). The enzyme catalyses 1-hexadecanoyl-2-(9Z-octadecenoyl)-sn-glycero-3-phosphoglycerol + H2O = 1-hexadecanoyl-sn-glycero-3-phosphoglycerol + (9Z)-octadecenoate + H(+). It carries out the reaction 1,2-dihexadecanoyl-sn-glycero-3-phospho-(1'-sn-glycerol) + H2O = 1-hexadecanoyl-sn-glycero-3-phospho-(1'-sn-glycerol) + hexadecanoate + H(+). The catalysed reaction is 1-hexadecanoyl-2-(9Z-octadecenoyl)-sn-glycero-3-phospho-L-serine + H2O = 1-hexadecanoyl-sn-glycero-3-phospho-L-serine + (9Z)-octadecenoate + H(+). It catalyses the reaction 1-hexadecanoyl-2-(9Z,12Z-octadecadienoyl)-sn-glycero-3-phosphoethanolamine + H2O = 1-hexadecanoyl-sn-glycero-3-phosphoethanolamine + (9Z,12Z)-octadecadienoate + H(+). The enzyme catalyses 1-hexadecanoyl-2-(9Z-octadecenoyl)-sn-glycero-3-phosphate + H2O = 1-hexadecanoyl-sn-glycero-3-phosphate + (9Z)-octadecenoate + H(+). It carries out the reaction 1-O-hexadecyl-2-acetyl-sn-glycero-3-phosphocholine + H2O = 1-O-hexadecyl-sn-glycero-3-phosphocholine + acetate + H(+). With respect to regulation, inhibited by methyl indoxam. Its function is as follows. Secretory calcium-dependent phospholipase A2 that primarily targets extracellular phospholipids. Hydrolyzes the ester bond of the fatty acyl group attached at sn-2 position of phospholipids with preference for phosphatidylcholines and phosphatidylglycerols over phosphatidylethanolamines. Preferentially releases sn-2 omega-6 and omega-3 polyunsaturated fatty acyl (PUFA) chains over saturated fatty acyls. Contributes to phospholipid remodeling of very low-density lipoprotein (VLDL), low-density lipoprotein (LDL) and high-density lipoprotein (HDL) particles. Hydrolyzes LDL phospholipids releasing unsaturated fatty acids that regulate macrophage differentiation toward foam cells. Efficiently hydrolyzes and inactivates platelet activating factor (PAF), a potent lipid mediator present in oxidized LDL. May act in an autocrine and paracrine manner. Secreted by lung epithelium, targets membrane phospholipids of infiltrating eosinophils, releasing arachidonate and boosting eicosanoid and cysteinyl leukotriene synthesis involved in airway inflammatory response. Secreted by gut epithelium, hydrolyzes dietary and biliary phosphatidylcholines in the gastrointestinal lumen. Plays a stem cell regulator role in colon epithelium. Within intracellular compartment, mediates Paneth-like cell differentiation and its stem cell supporting functions by inhibiting the Wnt signaling pathway in intestinal stem cell (ISC). Secreted in the intestinal lumen upon inflammation, acts in an autocrine way and promotes prostaglandin E2 synthesis that stimulates Wnt signaling pathway in ISCs and tissue regeneration. May participate in hair follicle morphogenesis by regulating phosphatidylethanolamines metabolism at the outermost epithelial layer and facilitating melanin synthesis. By releasing lysophosphatidylcholines (LPCs) at sperm acrosome, controls sperm cell capacitation, acrosome reaction and overall fertility. May promote neurite outgrowth in neuron fibers involved in nociception. Contributes to lipid remodeling of cellular membranes and generation of lipid mediators involved in pathogen clearance. Cleaves sn-2 fatty acyl chains of phosphatidylglycerols and phosphatidylethanolamines, which are major components of membrane phospholipids in bacteria. Displays bactericidal activity against Gram-positive bacteria by directly hydrolyzing phospholipids of the bacterial membrane. In pulmonary epithelium, may contribute to host defense response against adenoviral infection. Prevents adenovirus entry into host cells by hydrolyzing host cell plasma membrane, releasing C16:0 LPCs that inhibit virus-mediated membrane fusion and viral infection. Likely prevents adenoviral entry into the endosomes of host cells. May play a role in maturation and activation of innate immune cells including macrophages, group 2 innate lymphoid cells and mast cells. This is Group 10 secretory phospholipase A2 (PLA2G10) from Homo sapiens (Human).